Here is a 251-residue protein sequence, read N- to C-terminus: Ribosomal RNA small subunit methyltransferase J (251 aa).

Residues 100–101, 116–117, and Asp170 each bind S-adenosyl-L-methionine; these read RD and ER.

This sequence belongs to the methyltransferase superfamily. RsmJ family.

The protein localises to the cytoplasm. It carries out the reaction guanosine(1516) in 16S rRNA + S-adenosyl-L-methionine = N(2)-methylguanosine(1516) in 16S rRNA + S-adenosyl-L-homocysteine + H(+). Its function is as follows. Specifically methylates the guanosine in position 1516 of 16S rRNA. The sequence is that of Ribosomal RNA small subunit methyltransferase J from Actinobacillus pleuropneumoniae serotype 3 (strain JL03).